Reading from the N-terminus, the 155-residue chain is Small ribosomal subunit protein uS17 (155 aa).

The protein belongs to the universal ribosomal protein uS17 family. Component of the small ribosomal subunit. Mature ribosomes consist of a small (40S) and a large (60S) subunit. The 40S subunit contains about 32 different proteins and 1 molecule of RNA (18S). The 60S subunit contains 45 different proteins and 3 molecules of RNA (25S, 5.8S and 5S).

It localises to the cytoplasm. In terms of biological role, component of the ribosome, a large ribonucleoprotein complex responsible for the synthesis of proteins in the cell. The small ribosomal subunit (SSU) binds messenger RNAs (mRNAs) and translates the encoded message by selecting cognate aminoacyl-transfer RNA (tRNA) molecules. The large subunit (LSU) contains the ribosomal catalytic site termed the peptidyl transferase center (PTC), which catalyzes the formation of peptide bonds, thereby polymerizing the amino acids delivered by tRNAs into a polypeptide chain. The nascent polypeptides leave the ribosome through a tunnel in the LSU and interact with protein factors that function in enzymatic processing, targeting, and the membrane insertion of nascent chains at the exit of the ribosomal tunnel. The sequence is that of Small ribosomal subunit protein uS17 from Candida albicans (strain SC5314 / ATCC MYA-2876) (Yeast).